The following is a 166-amino-acid chain: Interferon gamma (166 aa).

The signal sequence occupies residues 1-23; the sequence is MKYTSYFLALLLCVLLGFSGSYG. Pyrrolidone carboxylic acid is present on Gln-24. 2 N-linked (GlcNAc...) asparagine glycosylation sites follow: Asn-39 and Asn-106.

It belongs to the type II (or gamma) interferon family. As to quaternary structure, homodimer. Interacts with IFNGR1 (via extracellular domain); this interaction promotes IFNGR1 dimerization. As to expression, released primarily from activated T lymphocytes.

The protein localises to the secreted. Type II interferon produced by immune cells such as T-cells and NK cells that plays crucial roles in antimicrobial, antiviral, and antitumor responses by activating effector immune cells and enhancing antigen presentation. Primarily signals through the JAK-STAT pathway after interaction with its receptor IFNGR1 to affect gene regulation. Upon IFNG binding, IFNGR1 intracellular domain opens out to allow association of downstream signaling components JAK2, JAK1 and STAT1, leading to STAT1 activation, nuclear translocation and transcription of IFNG-regulated genes. Many of the induced genes are transcription factors such as IRF1 that are able to further drive regulation of a next wave of transcription. Plays a role in class I antigen presentation pathway by inducing a replacement of catalytic proteasome subunits with immunoproteasome subunits. In turn, increases the quantity, quality, and repertoire of peptides for class I MHC loading. Increases the efficiency of peptide generation also by inducing the expression of activator PA28 that associates with the proteasome and alters its proteolytic cleavage preference. Up-regulates as well MHC II complexes on the cell surface by promoting expression of several key molecules such as cathepsins B/CTSB, H/CTSH, and L/CTSL. Participates in the regulation of hematopoietic stem cells during development and under homeostatic conditions by affecting their development, quiescence, and differentiation. In Bos indicus (Zebu), this protein is Interferon gamma (IFNG).